The following is a 187-amino-acid chain: Peptidyl-tRNA hydrolase (187 aa).

Y14 is a binding site for tRNA. H19 functions as the Proton acceptor in the catalytic mechanism. Residues Y60, N62, and N108 each coordinate tRNA.

Belongs to the PTH family. In terms of assembly, monomer.

The protein resides in the cytoplasm. The catalysed reaction is an N-acyl-L-alpha-aminoacyl-tRNA + H2O = an N-acyl-L-amino acid + a tRNA + H(+). Its function is as follows. Hydrolyzes ribosome-free peptidyl-tRNAs (with 1 or more amino acids incorporated), which drop off the ribosome during protein synthesis, or as a result of ribosome stalling. Functionally, catalyzes the release of premature peptidyl moieties from peptidyl-tRNA molecules trapped in stalled 50S ribosomal subunits, and thus maintains levels of free tRNAs and 50S ribosomes. The protein is Peptidyl-tRNA hydrolase of Mycoplasmopsis synoviae (strain 53) (Mycoplasma synoviae).